A 423-amino-acid chain; its full sequence is Guanine nucleotide-binding protein subunit beta (423 aa).

WD repeat units lie at residues Gly90 to Asp120, Leu132 to Arg162, Gly179 to Asp208, Asp220 to Asp256, Val268 to Asp298, Asp348 to Asp377, and Gly389 to Ser419.

Belongs to the WD repeat G protein beta family. As to quaternary structure, g proteins are composed of 3 units, alpha, beta and gamma. The beta-gamma subunit complex (STE4-STE18 complex) interacts with PLP1 and PLP2. Interacts with SYG1.

Functionally, implicated in the a- and alpha-factor response pathway. The beta and gamma chains of the putative yeast mating response pathway G protein play a positive role in initiation of the mating response. The beta and gamma chains are required for the GTPase activity, for replacement of GDP by GTP, and for G protein-effector interaction. This chain is Guanine nucleotide-binding protein subunit beta (STE4), found in Saccharomyces cerevisiae (strain ATCC 204508 / S288c) (Baker's yeast).